Consider the following 499-residue polypeptide: GTPase Der (499 aa).

Residues 3–166 (PVIALVGRPN…QALGIFPKDN (164 aa)) form the EngA-type G 1 domain. GTP-binding positions include 9–16 (GRPNVGKS), 56–60 (DTGGI), and 118–121 (NKVD). Residues 166–199 (NADENAEGEEGGELAEGEEVVAEGQEPKRIPGPS) are disordered. Residues 168–186 (DENAEGEEGGELAEGEEVV) show a composition bias toward acidic residues. The span at 190–199 (QEPKRIPGPS) shows a compositional bias: basic and acidic residues. An EngA-type G 2 domain is found at 204–377 (IKIAIIGRPN…SVQAAFKSAI (174 aa)). GTP is bound by residues 210–217 (GRPNVGKS), 257–261 (DTAGV), and 322–325 (NKWD). Residues 378–462 (TRWPTSRLTQ…PIRIEYKGGD (85 aa)) enclose the KH-like domain. Residues 459 to 472 (KGGDNPYEGKKNTL) are compositionally biased toward basic and acidic residues. The segment at 459–499 (KGGDNPYEGKKNTLTDRQVNKKRRLMSHHKKAEKKRRDKKR) is disordered. Residues 478–499 (NKKRRLMSHHKKAEKKRRDKKR) show a composition bias toward basic residues.

Belongs to the TRAFAC class TrmE-Era-EngA-EngB-Septin-like GTPase superfamily. EngA (Der) GTPase family. In terms of assembly, associates with the 50S ribosomal subunit.

Functionally, GTPase that plays an essential role in the late steps of ribosome biogenesis. The chain is GTPase Der from Stutzerimonas stutzeri (strain A1501) (Pseudomonas stutzeri).